Here is a 251-residue protein sequence, read N- to C-terminus: Imidazole glycerol phosphate synthase subunit HisF (251 aa).

Residues aspartate 11 and aspartate 130 contribute to the active site.

It belongs to the HisA/HisF family. Heterodimer of HisH and HisF.

The protein localises to the cytoplasm. The catalysed reaction is 5-[(5-phospho-1-deoxy-D-ribulos-1-ylimino)methylamino]-1-(5-phospho-beta-D-ribosyl)imidazole-4-carboxamide + L-glutamine = D-erythro-1-(imidazol-4-yl)glycerol 3-phosphate + 5-amino-1-(5-phospho-beta-D-ribosyl)imidazole-4-carboxamide + L-glutamate + H(+). The protein operates within amino-acid biosynthesis; L-histidine biosynthesis; L-histidine from 5-phospho-alpha-D-ribose 1-diphosphate: step 5/9. Functionally, IGPS catalyzes the conversion of PRFAR and glutamine to IGP, AICAR and glutamate. The HisF subunit catalyzes the cyclization activity that produces IGP and AICAR from PRFAR using the ammonia provided by the HisH subunit. In Prosthecochloris aestuarii (strain DSM 271 / SK 413), this protein is Imidazole glycerol phosphate synthase subunit HisF.